We begin with the raw amino-acid sequence, 171 residues long: CASP-like protein 0U2 (171 aa).

At 1 to 22 the chain is on the cytoplasmic side; that stretch reads MPVFGLAALKLNWEALSTPKFR. Residues 23 to 42 form a helical membrane-spanning segment; it reads VTFAQWVCSLLMWSLMASYS. Topologically, residues 43 to 48 are extracellular; it reads KHGEFK. A helical membrane pass occupies residues 49-69; it reads FVVVFGLVMWGLASTYLVYQL. Residues 70–77 are Cytoplasmic-facing; the sequence is LNGPPLAP. Residues 78–98 form a helical membrane-spanning segment; the sequence is IVEFWANVAAGSLAFICLVLA. Residues 99-121 are Extracellular-facing; it reads SATCNRAVGEPQTKVCSGELKPK. Residues 122-142 form a helical membrane-spanning segment; that stretch reads ASAAFAFLLLCAYGGLAYLSW. Over 143–171 the chain is Cytoplasmic; sequence RTWRNPPTIASYALHDDPEFAQPLHSSHK.

Belongs to the Casparian strip membrane proteins (CASP) family. Homodimer and heterodimers.

It localises to the cell membrane. The polypeptide is CASP-like protein 0U2 (Chlorokybus atmophyticus (Soil alga)).